We begin with the raw amino-acid sequence, 405 residues long: Homocitrate synthase AksA (405 aa).

Residues 23-274 (IEICDVTLRD…IERYDTTKLT (252 aa)) enclose the Pyruvate carboxyltransferase domain.

It belongs to the alpha-IPM synthase/homocitrate synthase family.

It carries out the reaction acetyl-CoA + 2-oxoglutarate + H2O = (2R)-homocitrate + CoA + H(+). It catalyses the reaction 2-oxoadipate + acetyl-CoA + H2O = (R)-dihomocitrate + CoA + H(+). The enzyme catalyses 2-oxoheptanedioate + acetyl-CoA + H2O = (R)-trihomocitrate + CoA + H(+). The protein operates within organic acid metabolism; 2-oxosuberate biosynthesis. Catalyzes the condensation of alpha-ketoglutarate and acetyl-CoA to form (R)-homocitrate. Can also catalyze the condensation of alpha-ketoadipate with acetyl-CoA to form (R)-homo(2)citrate, and the condensation of alpha-ketopimelate with acetyl-CoA to form (R)-homo(3)citrate. These reactions are part of the biosynthesis pathway of coenzyme B and biotin. In Methanosarcina acetivorans (strain ATCC 35395 / DSM 2834 / JCM 12185 / C2A), this protein is Homocitrate synthase AksA (aksA).